A 367-amino-acid chain; its full sequence is Palmitoyltransferase ERF2 (367 aa).

Over residues 1–23 (MRLHSRQASNPHRQYSAAQSLHS) the composition is skewed to polar residues. The disordered stretch occupies residues 1 to 32 (MRLHSRQASNPHRQYSAAQSLHSSSDDSEHKE). The Cytoplasmic portion of the chain corresponds to 1 to 87 (MRLHSRQASN…GRLRTVAKTK (87 aa)). Residues 88-108 (YLSVLVLVMLIAPIVLFSVFE) form a helical membrane-spanning segment. Over 109-121 (TGYLWKHVAGAKP) the chain is Lumenal. A helical transmembrane segment spans residues 122–142 (CVVLCYYFWTLCFASFISTGA). Residues 143–229 (TDPGTLPRNI…NCIGQRNHRY (87 aa)) lie on the Cytoplasmic side of the membrane. The DHHC domain maps to 185-235 (KYCTTCRIWRPPRASHCAVCDSCILSFDHHCDWLNNCIGQRNHRYFLAFLF). C215 functions as the S-palmitoyl cysteine intermediate in the catalytic mechanism. Residues 230 to 250 (FLAFLFSSVLSSIWLLTCCAL) form a helical membrane-spanning segment. Residues 251–262 (KLRHAGSPSAAP) lie on the Lumenal side of the membrane. The chain crosses the membrane as a helical span at residues 263–283 (VSLLLICYCAVSIWYPLLLAI). Topologically, residues 284–367 (YHLFLTGTQQ…LPIPHSFEKV (84 aa)) are cytoplasmic.

It belongs to the DHHC palmitoyltransferase family. ERF2/ZDHHC9 subfamily. As to quaternary structure, interacts with ERF4. Autopalmitoylated.

The protein localises to the endoplasmic reticulum membrane. It carries out the reaction L-cysteinyl-[protein] + hexadecanoyl-CoA = S-hexadecanoyl-L-cysteinyl-[protein] + CoA. In terms of biological role, the ERF2-ERF4 complex is a palmitoyltransferase specific for Ras proteins. The sequence is that of Palmitoyltransferase ERF2 (ERF2) from Eremothecium gossypii (strain ATCC 10895 / CBS 109.51 / FGSC 9923 / NRRL Y-1056) (Yeast).